We begin with the raw amino-acid sequence, 734 residues long: Polyphosphate kinase (734 aa).

N67 contributes to the ATP binding site. Mg(2+)-binding residues include R392 and R422. The 35-residue stretch at 447–481 (THLKTHSKIALVVKRINNELTSFVHLGTGNYNDKT) folds into the PLD phosphodiesterase domain. Residue H452 is the Phosphohistidine intermediate of the active site. Residues Y485, R581, and H609 each coordinate ATP. The tract at residues 705–734 (KKQSVQPSGQPVHSRRGGSWMRKLKNTFKR) is disordered.

The protein belongs to the polyphosphate kinase 1 (PPK1) family. Mg(2+) is required as a cofactor. An intermediate of this reaction is the autophosphorylated ppk in which a phosphate is covalently linked to a histidine residue through a N-P bond.

The enzyme catalyses [phosphate](n) + ATP = [phosphate](n+1) + ADP. In terms of biological role, catalyzes the reversible transfer of the terminal phosphate of ATP to form a long-chain polyphosphate (polyP). This is Polyphosphate kinase from Staphylococcus epidermidis (strain ATCC 12228 / FDA PCI 1200).